The primary structure comprises 308 residues: 1-acyl-sn-glycerol-3-phosphate acyltransferase (308 aa).

Helical transmembrane passes span 65-85 (FLSM…LLPW), 124-144 (AIYI…WLIP), and 148-168 (VTIA…YVLA). The short motif at 130 to 135 (HASLVD) is the HXXXXD motif element.

This sequence belongs to the 1-acyl-sn-glycerol-3-phosphate acyltransferase family.

The protein localises to the membrane. It catalyses the reaction a 1-acyl-sn-glycero-3-phosphate + an acyl-CoA = a 1,2-diacyl-sn-glycero-3-phosphate + CoA. Converts lysophosphatidic acid (LPA) into phosphatidic acid by incorporating acyl moiety at the 2 position. This enzyme shows a preference for medium-chain-length fatty acyl-coenzyme a substrates. The sequence is that of 1-acyl-sn-glycerol-3-phosphate acyltransferase from Cocos nucifera (Coconut palm).